The primary structure comprises 116 residues: PDLHLLYPSQSHRLSPSRAQGILKTARHESQRPDAVLDDVVAAIGSQPRAAGARRRMLRIHKRQPPAGTLLRFQNVQSLHRRVRIFMIVCVLWCVWICLSTFLIAMFHRRSSGMPE.

This is an uncharacterized protein from Homo sapiens (Human).